A 264-amino-acid chain; its full sequence is Movement protein (264 aa).

Residues 221–264 (YRSRSQSVSGRGKRHSKPPNRRLDSASEESSSVSFDDGLQSDHT) form a disordered region. The segment covering 231–240 (RGKRHSKPPN) has biased composition (basic residues).

Belongs to the tobamovirus movement protein family.

It is found in the host cytoplasm. It localises to the host cytoskeleton. Its subcellular location is the host cell junction. The protein resides in the host plasmodesma. Its function is as follows. Transports viral genome to neighboring plant cells directly through plasmosdesmata, without any budding. The movement protein allows efficient cell to cell propagation, by bypassing the host cell wall barrier. Forms a ribonucleoprotein complex with viral RNA. Binds microtubules and modulates microtubule stability. Can bind double-stranded DNA. This chain is Movement protein (MP), found in Citrullus (Cucumber).